The sequence spans 58 residues: 6.8 kDa protein (58 aa).

The chain is 6.8 kDa protein from Satellite tobacco mosaic virus (STMV).